A 358-amino-acid chain; its full sequence is Capsid protein VP1/VP2 (358 aa).

Over residues 1 to 15 (MADSTSMDHDGEQRG) the composition is skewed to basic and acidic residues. A disordered region spans residues 1 to 37 (MADSTSMDHDGEQRGTKRKRDAGAGGSGAGIGKGTSN). The segment covering 23–33 (GAGGSGAGIGK) has biased composition (gly residues).

It is found in the virion. In terms of biological role, capsid protein self-assembles to form an icosahedral capsid with a T=1 symmetry, about 22 nm in diameter, and consisting of 60 copies of size variants of the capsid proteins, which differ in the N-terminushe capsid encapsulates the genomic ssDNA. Capsid proteins are responsible for the attachment to host cell receptors. This attachment induces virion internalization predominantly through clathrin-dependent endocytosis. This is Capsid protein VP1/VP2 (VP) from Aedes (Aedes densovirus).